The primary structure comprises 305 residues: UDP-3-O-acyl-N-acetylglucosamine deacetylase (305 aa).

Residues His79, His238, and Asp242 each contribute to the Zn(2+) site. The active-site Proton donor is His265.

The protein belongs to the LpxC family. It depends on Zn(2+) as a cofactor.

It carries out the reaction a UDP-3-O-[(3R)-3-hydroxyacyl]-N-acetyl-alpha-D-glucosamine + H2O = a UDP-3-O-[(3R)-3-hydroxyacyl]-alpha-D-glucosamine + acetate. It functions in the pathway glycolipid biosynthesis; lipid IV(A) biosynthesis; lipid IV(A) from (3R)-3-hydroxytetradecanoyl-[acyl-carrier-protein] and UDP-N-acetyl-alpha-D-glucosamine: step 2/6. Catalyzes the hydrolysis of UDP-3-O-myristoyl-N-acetylglucosamine to form UDP-3-O-myristoylglucosamine and acetate, the committed step in lipid A biosynthesis. This Vibrio campbellii (strain ATCC BAA-1116) protein is UDP-3-O-acyl-N-acetylglucosamine deacetylase.